Reading from the N-terminus, the 236-residue chain is CD81 antigen (236 aa).

At 1–12 (MGVEGCTKCIKY) the chain is on the cytoplasmic side. Residues 13–33 (LLFVFNFVFWLAGGVILGVAL) form a helical membrane-spanning segment. At 34 to 63 (WLRHDPQTTSLLYLELGNKPAPNTFYVGIY) the chain is on the extracellular side. Residues 64 to 84 (ILIAVGAVMMFVGFLGCYGAI) form a helical membrane-spanning segment. Residues 85-89 (QESQC) are Cytoplasmic-facing. A helical transmembrane segment spans residues 90–112 (LLGTFFTCLVILFACEVAAGIWG). Over 113–201 (FVNKDQIAKD…QKIDELFSGK (89 aa)) the chain is Extracellular. 2 disulfide bridges follow: C156/C190 and C157/C175. The chain crosses the membrane as a helical span at residues 202 to 224 (LYLIGIAAIVVAVIMIFEMILSM). Residue E219 coordinates cholesterol. Residues 225 to 236 (VLCCGIRNSSVY) lie on the Cytoplasmic side of the membrane.

This sequence belongs to the tetraspanin (TM4SF) family. In terms of assembly, homodimer. Part of a complex composed of CD19, CR2/CD21, CD81 and IFITM1/CD225 in the membrane of mature B cells. Interacts (via the second extracellular domain) with CD19; this interaction is initiated early during biosynthesis in the ER and enables trafficking of only properly folded CD19. Part of a complex that includes MHC class II/HLA-DR molecules and IFITM1. Interacts with IFITM1. Interacts with IFITM2 and IFITM3. Part of integrin-tetraspanin complex composed of CD9, CD81, beta-1 and beta-2 integrins in the membrane of monocyte/macrophages. Interacts (via the second extracellular domain) with integrin ITGAV:ITGB3. Interacts with CD247/CD3 zeta, ICAM1 and CD9 at the immune synapse on T cell membrane. Part of a GPCR-tetraspanin complex consisting at least of ADGRG1, CD81, possibly CD9, and GNA11 in which CD81 enhances the association of ADGRG1 with GNA11. Part of a complex composed of CD9, CD81, PTGFRN and IGSF8. Interacts directly with IGSF8. Interacts with CD53 and SCIMP. Interacts with SAMHD1 (via its C-terminus). Interacts with glypican GPC3 and with the transcriptional repressor HHEX; binding to GPC3 decreases the availability of free CD81 for binding to HHEX, resulting in nuclear translocation of HHEX and transcriptional repression. Interacts with CLDN1. Interacts with CLDN6 and CLDN9. In terms of processing, not glycosylated. Likely constitutively palmitoylated at low levels. Protein palmitoylation is up-regulated upon coligation of BCR and CD9-C2R-CD81 complexes in lipid rafts. As to expression, expressed in oocytes (at protein level). Highly expressed in granulosa cells. Expressed in skeletal muscle mainly in endothelial cells of endomysial capillaries, in satellite cells and myoblasts (at protein level). Expressed in hepatocytes (at protein level).

It localises to the cell membrane. It is found in the basolateral cell membrane. Structural component of specialized membrane microdomains known as tetraspanin-enriched microdomains (TERMs), which act as platforms for receptor clustering and signaling. Essential for trafficking and compartmentalization of CD19 receptor on the cell surface of activated B cells. Upon initial encounter with a microbial pathogen, enables the assembly of CD19-CR2 and B cell receptor complexes at signaling TERMs, lowering the threshold dose of antigen required to trigger B cell clonal expansion and humoral immune response. In T cells, associates with CD4 or CD8 coreceptors and defines the maturation state of antigen-induced synapses with B cells. Facilitates localization of CD3 in these immune synapses, required for costimulation and sustained activation of T cells, preferentially triggering T helper type 2 immune response. Can act both as positive and negative regulator of homotypic or heterotypic cell-cell fusion processes. In myoblasts, associates with another tetraspanin CD9 in complex with PTGFRN and inhibits myotube fusion during muscle regeneration. In macrophages, associates with CD9 and beta-1 and beta-2 integrins, and prevents macrophage fusion into multinucleated giant cells specialized in ingesting complement-opsonized large particles. Also prevents the fusion between mononuclear cell progenitors into osteoclasts in charge of bone resorption. Positively regulates sperm-egg fusion and may be involved in the acrosome reaction. Regulates protein trafficking in intracellular compartments. In T cells, associates with dNTPase SAMHD1 and defines its subcellular location, enabling its degradation by the proteasome and thereby controlling intracellular dNTP levels. Also regulates integrin-dependent migration of macrophages, particularly relevant for inflammatory response in the lung. Its function is as follows. (Microbial infection) Specifically required for Plasmodium yoelii infectivity of hepatocytes, controlling sporozoite entry in hepatocytes via the parasitophorous vacuole and subsequent parasite differentiation to exoerythrocytic forms. This chain is CD81 antigen, found in Mus musculus (Mouse).